The primary structure comprises 446 residues: Iron-sulfur cluster assembly SufBD family protein PH1385 (446 aa).

This sequence belongs to the iron-sulfur cluster assembly SufBD family.

The sequence is that of Iron-sulfur cluster assembly SufBD family protein PH1385 from Pyrococcus horikoshii (strain ATCC 700860 / DSM 12428 / JCM 9974 / NBRC 100139 / OT-3).